A 369-amino-acid polypeptide reads, in one-letter code: Chorismate synthase (369 aa).

Residues Arg48 and Arg54 each coordinate NADP(+). FMN is bound by residues 125-127 (RSS), 238-239 (NA), Gly278, 293-297 (KPTSS), and Arg319.

The protein belongs to the chorismate synthase family. Homotetramer. It depends on FMNH2 as a cofactor.

It catalyses the reaction 5-O-(1-carboxyvinyl)-3-phosphoshikimate = chorismate + phosphate. It functions in the pathway metabolic intermediate biosynthesis; chorismate biosynthesis; chorismate from D-erythrose 4-phosphate and phosphoenolpyruvate: step 7/7. Catalyzes the anti-1,4-elimination of the C-3 phosphate and the C-6 proR hydrogen from 5-enolpyruvylshikimate-3-phosphate (EPSP) to yield chorismate, which is the branch point compound that serves as the starting substrate for the three terminal pathways of aromatic amino acid biosynthesis. This reaction introduces a second double bond into the aromatic ring system. This chain is Chorismate synthase, found in Cupriavidus metallidurans (strain ATCC 43123 / DSM 2839 / NBRC 102507 / CH34) (Ralstonia metallidurans).